A 626-amino-acid chain; its full sequence is Dynein, cytoplasmic 1, intermediate chain 2a (626 aa).

The segment covering 20 to 43 (QIREEKKRKEEERKKKEAELKKDA) has biased composition (basic and acidic residues). 2 disordered regions span residues 20 to 108 (QIRE…RTLH) and 142 to 197 (KEVV…HELT). Positions 82-99 (TAKSVGSPSEAGSQDSGD) are enriched in polar residues. Residues 160 to 169 (KDEEDEEEET) are compositionally biased toward acidic residues. The span at 177–197 (ETEKEKPEEKQVEEALPHELT) shows a compositional bias: basic and acidic residues. 7 WD repeats span residues 265-314 (SKQR…ATPE), 318-358 (HCQS…RTPV), 367-408 (AHTH…QPQD), 417-457 (SKSV…AGIS), 462-507 (GHHG…PLYS), 510-550 (DNSD…EVPT), and 556-595 (DGSPALNRLRWSQSGREIAVGDSEGQIHIYDVGEQIAVPR).

Belongs to the dynein intermediate chain family. As to quaternary structure, homodimer. The cytoplasmic dynein 1 complex consists of two catalytic heavy chains (HCs) and a number of non-catalytic subunits presented by intermediate chains (ICs), light intermediate chains (LICs) and light chains (LCs); the composition seems to vary in respect to the IC, LIC and LC composition. The heavy chain homodimer serves as a scaffold for the probable homodimeric assembly of the respective non-catalytic subunits. The ICs and LICs bind directly to the HC dimer and the LCs assemble on the IC dimer.

The protein localises to the cytoplasm. The protein resides in the cytoskeleton. Its function is as follows. Acts as one of several non-catalytic accessory components of the cytoplasmic dynein 1 complex that are thought to be involved in linking dynein to cargos and to adapter proteins that regulate dynein function. Cytoplasmic dynein 1 acts as a motor for the intracellular retrograde motility of vesicles and organelles along microtubules. Plays a role in the development of anterior brain and cartilaginous structures. This chain is Dynein, cytoplasmic 1, intermediate chain 2a (dync1i2a), found in Danio rerio (Zebrafish).